Here is a 2191-residue protein sequence, read N- to C-terminus: FRAS1-related extracellular matrix protein 1 (2191 aa).

Positions 1–29 (MHSPGCTGPKAQWFLLLQLLLLHLDRVSA) are cleaved as a signal peptide. The Cell attachment site signature appears at 205 to 207 (RGD). CSPG repeat units lie at residues 300 to 394 (VPRA…MELE), 419 to 506 (APRV…FRIF), and 527 to 621 (PPFL…FVLW). Asn-341 carries N-linked (GlcNAc...) asparagine glycosylation. N-linked (GlcNAc...) asparagine glycans are attached at residues Asn-566 and Asn-628. CSPG repeat units follow at residues 648–779 (KEAP…VSVS), 801–892 (QVPE…LEVT), and 912–1007 (EPPI…LVVS). Asn-1039 is a glycosylation site (N-linked (GlcNAc...) asparagine). CSPG repeat units lie at residues 1049–1151 (PPSI…VYAT), 1172–1273 (EAPD…IQLS), 1294–1391 (TPTL…FYLW), 1412–1504 (GDIV…FTIS), 1525–1614 (LPVL…FLAT), and 1650–1742 (HLHS…FQAM). Asn-1180 carries an N-linked (GlcNAc...) asparagine glycan. Asn-1584 carries N-linked (GlcNAc...) asparagine glycosylation. The region spanning 1749 to 1848 (ATPQSLDLRW…DDEVFEVILN (100 aa)) is the Calx-beta domain. The tract at residues 1874–1921 (HPSNSFNQSKHSTWGKGPWHPLPSGSSSLTTSGSPLLERPPPSFTSGD) is disordered. Residues 1875-1885 (PSNSFNQSKHS) are compositionally biased toward polar residues. Residues 1895–1910 (LPSGSSSLTTSGSPLL) show a composition bias toward low complexity. In terms of domain architecture, C-type lectin spans 2072-2186 (HSGYCHILVT…CSKGKAHNFV (115 aa)). Cysteines 2163 and 2177 form a disulfide.

It belongs to the FRAS1 family. In terms of assembly, interacts with FREM2. As to expression, expressed in epidermis and hair follicles. Expressed in many developing epidermal appendages, including the whisker and sensory vibrissae, cranial and trunk hair follicles, meibomian glands, teeth, footpads, eyelash primordia and invaginating mammary glands. Limb expression localizes to sheets of dermal cells on the apical and basal surfaces of the digits but, unlike FRAS1, is excluded from the apical ectodermal ridge. Usually expressed at higher level in dermal cells underlying the differentiating epithelial components, especially underlying the epidermis of the head, limbs, and eyelids. Expression in the eyelid dermis is apparent as early as 13 dpc. Postnatal expression in the skin is limited to the dermal papillae. In the kidney, it is expressed from 12.5 dpc in the mesenchyme surrounding the branching ureteric tree, with a strong expression in the more proximal regions of these tubules rather than at the proliferating and branching ends of the ureteric buds. In hair follicle, it is selectively expressed in the vibrissal hair primordia during development. Preferentially expressed in the whisker pad epithelia of 12.5 dpc embryos, in both the epithelial and mesenchymal cells of developing hair follicles. In the early stages of hair follicle development (i.e. stages 0-1), it is expressed in both hair placodes and dermal condensations. In stage 2, it is detected in dermal condensations and adjacent epithelia, but not in the upper region of the hair follicles. Expressed at the tip of developing hair follicles in the later stages (i.e. stages 3-5).

Its subcellular location is the secreted. It is found in the extracellular space. The protein resides in the extracellular matrix. It localises to the basement membrane. Extracellular matrix protein that plays a role in epidermal differentiation and is required for epidermal adhesion during embryonic development. In Mus musculus (Mouse), this protein is FRAS1-related extracellular matrix protein 1 (Frem1).